A 250-amino-acid chain; its full sequence is 2,3-bisphosphoglycerate-dependent phosphoglycerate mutase (250 aa).

Residues 10 to 17, 23 to 24, Arg62, 89 to 92, Lys100, 116 to 117, and 185 to 186 each bind substrate; these read RHGESQWN, TG, ERHY, RR, and GN. His11 acts as the Tele-phosphohistidine intermediate in catalysis. The Proton donor/acceptor role is filled by Glu89.

Belongs to the phosphoglycerate mutase family. BPG-dependent PGAM subfamily. As to quaternary structure, homodimer.

It carries out the reaction (2R)-2-phosphoglycerate = (2R)-3-phosphoglycerate. It functions in the pathway carbohydrate degradation; glycolysis; pyruvate from D-glyceraldehyde 3-phosphate: step 3/5. Catalyzes the interconversion of 2-phosphoglycerate and 3-phosphoglycerate. The polypeptide is 2,3-bisphosphoglycerate-dependent phosphoglycerate mutase (Yersinia enterocolitica serotype O:8 / biotype 1B (strain NCTC 13174 / 8081)).